Reading from the N-terminus, the 359-residue chain is Histamine H2 receptor (359 aa).

Residues 1-22 (MISNGTGSSFCLDSPPCRITVS) are Extracellular-facing. N4 is a glycosylation site (N-linked (GlcNAc...) asparagine). Residues 23-44 (VVLTVLILITIAGNVVVCLAVG) traverse the membrane as a helical segment. Topologically, residues 45–57 (LNRRLRSLTNCFI) are cytoplasmic. The chain crosses the membrane as a helical span at residues 58 to 81 (VSLAITDLLLGLLVLPFSAFYQLS). Topologically, residues 82–92 (CRWSFGKVFCN) are extracellular. Cysteines 91 and 174 form a disulfide. Residues 93 to 114 (IYTSLDVMLCTASILNLFMISL) traverse the membrane as a helical segment. The Cytoplasmic segment spans residues 115 to 134 (DRYCAVTDPLRYPVLITPVR). A helical transmembrane segment spans residues 135-159 (VAVSLVLIWVISITLSFLSIHLGWN). Over 160–180 (SRNETSSFNHTIPKCKVQVNL) the chain is Extracellular. Residues 181–204 (VYGLVDGLVTFYLPLLVMCITYYR) traverse the membrane as a helical segment. Residues 205 to 234 (IFKIARDQAKRIHHMGSWKAATIGEHKATV) lie on the Cytoplasmic side of the membrane. Residues 235–258 (TLAAVMGAFIICWFPYFTVFVYRG) traverse the membrane as a helical segment. At 259–267 (LKGDDAINE) the chain is on the extracellular side. A helical transmembrane segment spans residues 268-289 (AFEAVVLWLGYANSALNPILYA). Over 290–359 (TLNRDFRTAY…VTAPRGATDR (70 aa)) the chain is Cytoplasmic. Residue C305 is the site of S-palmitoyl cysteine attachment. A compositionally biased stretch (polar residues) spans 310 to 327 (HNAQETSLRSNSSQLARN). The segment at 310 to 359 (HNAQETSLRSNSSQLARNQSREPMRQEEKPLKLQVWSGTEVTAPRGATDR) is disordered. Positions 328 to 340 (QSREPMRQEEKPL) are enriched in basic and acidic residues.

It belongs to the G-protein coupled receptor 1 family. Gastric fundus and, to a lesser extent, in brain.

Its subcellular location is the cell membrane. The H2 subclass of histamine receptors mediates gastric acid secretion. The activity of this receptor is mediated by G proteins which activate adenylyl cyclase. The sequence is that of Histamine H2 receptor (HRH2) from Canis lupus familiaris (Dog).